The chain runs to 24 residues: Glutathione S-transferase (24 aa).

It belongs to the GST superfamily. In terms of assembly, monomer and homodimer.

It localises to the cytoplasm. The catalysed reaction is RX + glutathione = an S-substituted glutathione + a halide anion + H(+). Conjugation of reduced glutathione to a wide number of exogenous and endogenous hydrophobic electrophiles. This Pseudomonas sp. (strain CF600) protein is Glutathione S-transferase.